Here is a 110-residue protein sequence, read N- to C-terminus: Iron-sulfur cluster assembly protein CyaY (110 aa).

This sequence belongs to the frataxin family.

In terms of biological role, involved in iron-sulfur (Fe-S) cluster assembly. May act as a regulator of Fe-S biogenesis. This is Iron-sulfur cluster assembly protein CyaY from Pseudomonas entomophila (strain L48).